The chain runs to 142 residues: Deoxyuridine 5'-triphosphate nucleotidohydrolase (142 aa).

Substrate-binding positions include 62–64, asparagine 75, 79–81, and lysine 89; these read RSG and TID.

It belongs to the dUTPase family. It depends on Mg(2+) as a cofactor.

The enzyme catalyses dUTP + H2O = dUMP + diphosphate + H(+). It participates in pyrimidine metabolism; dUMP biosynthesis; dUMP from dCTP (dUTP route): step 2/2. Its function is as follows. This enzyme is involved in nucleotide metabolism: it produces dUMP, the immediate precursor of thymidine nucleotides and it decreases the intracellular concentration of dUTP so that uracil cannot be incorporated into DNA. The protein is Deoxyuridine 5'-triphosphate nucleotidohydrolase of Nautilia profundicola (strain ATCC BAA-1463 / DSM 18972 / AmH).